The sequence spans 199 residues: Large ribosomal subunit protein bL9 (199 aa).

Positions 153 to 199 are disordered; that stretch reads KPVKASEKKGRRPRRDEEASDEQILAEENSVTEEAVSEEIQNSESEN.

The protein belongs to the bacterial ribosomal protein bL9 family.

Binds to the 23S rRNA. The chain is Large ribosomal subunit protein bL9 from Treponema denticola (strain ATCC 35405 / DSM 14222 / CIP 103919 / JCM 8153 / KCTC 15104).